We begin with the raw amino-acid sequence, 294 residues long: ATP phosphoribosyltransferase (294 aa).

It belongs to the ATP phosphoribosyltransferase family. Long subfamily. It depends on Mg(2+) as a cofactor.

Its subcellular location is the cytoplasm. The catalysed reaction is 1-(5-phospho-beta-D-ribosyl)-ATP + diphosphate = 5-phospho-alpha-D-ribose 1-diphosphate + ATP. The protein operates within amino-acid biosynthesis; L-histidine biosynthesis; L-histidine from 5-phospho-alpha-D-ribose 1-diphosphate: step 1/9. With respect to regulation, feedback inhibited by histidine. Its function is as follows. Catalyzes the condensation of ATP and 5-phosphoribose 1-diphosphate to form N'-(5'-phosphoribosyl)-ATP (PR-ATP). Has a crucial role in the pathway because the rate of histidine biosynthesis seems to be controlled primarily by regulation of HisG enzymatic activity. This chain is ATP phosphoribosyltransferase, found in Chlorobium phaeovibrioides (strain DSM 265 / 1930) (Prosthecochloris vibrioformis (strain DSM 265)).